A 487-amino-acid polypeptide reads, in one-letter code: Cobyric acid synthase (487 aa).

Positions 251-439 (KLKVVAPAYP…CHGVLDHPEA (189 aa)) constitute a GATase cobBQ-type domain. Cysteine 332 (nucleophile) is an active-site residue. Histidine 431 is an active-site residue.

This sequence belongs to the CobB/CobQ family. CobQ subfamily.

Its pathway is cofactor biosynthesis; adenosylcobalamin biosynthesis. Catalyzes amidations at positions B, D, E, and G on adenosylcobyrinic A,C-diamide. NH(2) groups are provided by glutamine, and one molecule of ATP is hydrogenolyzed for each amidation. The chain is Cobyric acid synthase from Dechloromonas aromatica (strain RCB).